Consider the following 1109-residue polypeptide: MGKFYYSNRRLACWAAGKNPHLGGSVEQWLAAINTDPSFRQTVKEDVQENREQPTAVRMFSWKVGSGPIDNPEKCDWHFVLTGERPAPSRPVKADEVVVVPQPKKVVIPTPPPPPAPYFRAVGAFAPTRSEFVRAIVERLTRLREESRAAALFAELPLEYPQGAPLKLSLAAKFAMLKHTTWRKWYDTSDERLLEAHPGGPCLPPPPPIQNPPSFQERVREFCRMKSCTKAFALETSLGLNKAWVGLVDIPSTSVCCADGKTTGGQTIAQEADPLQHRISTSVAPGRAQWISERRQALRRREQANSFEGLAAQTDMTFEQARNAYLGAADMIEQGLPLLPPLRSAYAPRGLWRGPSTRANYTLDFRLNGIPTGTNTLEILYNPVSEEEMEEYRDRGMSAVVIDALEIAINPFGMPGNPTDLTVVATYGHERDMTRAFIGSASTFLGNGLARAIFFPGLQYSQEEPRRESIIRLYVASTNATVDTDSVLAAISVGTLRQHVGSMHYRTVASTVHQAQVQGTTLRATMMGNTVVVSPEGSLVTGTPEARVEIGGGSSIRMVGPLQWESVEEPGQTFSIRSRSRSVRIDRNVDLPQLEAEPRLSSTVRGLAGRGVIYIPKDCQANRYLGTLNIRDMISDFKGVQYEKWITAGLVMPTFKIVIRLPANAFTGLTWVMSFDAYNRITSRITASADPVYTLSVPHWLIHHKLGTFSCEIDYGELCGHAMWFKSTTFESPRLHFTCLTGNNKELAADWQAVVELYAELEEATSFLGKPTLVFDPGVFNGKFQFLTCPPIFFDLTAVTALRSAGLTLGQVPMVGTTKVYNLNSTLVSCVLGMGGTVRGRVHICAPIFYSIVLWVVSEWNGTTMDWNELFKYPGVYVEEDGSFEVKIRSPYHRTPARLLAGQSQRDMSSLNFYAIAGPIAPSGETAQLPIVVQIDEIVRPDLSLPSFEDDYFVWVDFSEFTLDKEEIEIGSRFFDFTSNTCRVSMGENPFAAMIACHGLHSGVLDLKLQWSLNTEFGKSSGSVTITKLVGDKAMGLDGPSHVFAIQKLEGTTELLVGNFAGANPNTRFSLYSRWMAIKLDQAKSIKVLRVLCKPRPGFSFYGRTSFPV.

This sequence belongs to the nepoviruses RNA2 polyprotein family. Specific enzymatic cleavages in vivo by the P1 encoded 3C-like protease yield mature proteins.

It is found in the host cell junction. The protein localises to the host plasmodesma. It localises to the host cytoplasm. The protein resides in the host nucleus. Its subcellular location is the virion. In terms of biological role, implicated in RNA2 replication. Could also be required for nematode transmission of the virus. Transports viral genome to neighboring plant cells directly through plasmosdesmata, without any budding. The movement protein allows efficient cell to cell propagation, by bypassing the host cell wall barrier. Acts by forming a tubular structure at the host plasmodesmata, enlarging it enough to allow free passage of virion capsids. This Vitis rupestris (Grape) protein is RNA2 polyprotein.